An 86-amino-acid polypeptide reads, in one-letter code: Progonadoliberin IIB (86 aa).

The signal sequence occupies residues 1-24 (MVHICRLFVVMGMLMFLSVQFASS). The residue at position 25 (Gln-25) is a Pyrrolidone carboxylic acid. A Glycine amide modification is found at Gly-34.

Belongs to the GnRH family. Olfactory bulbs, hypothalamus and telencephalon, midbrain and posterior brain areas.

It localises to the secreted. Its function is as follows. Stimulates the secretion of gonadotropins. The chain is Progonadoliberin IIB (gnrh2b) from Carassius auratus (Goldfish).